The sequence spans 395 residues: Phosphoglycerate kinase (395 aa).

Residues 21 to 23 (DLN), R36, 59 to 62 (HLGR), R113, and R146 contribute to the substrate site. Residues K197, E324, and 350–353 (GGDT) each bind ATP.

It belongs to the phosphoglycerate kinase family. As to quaternary structure, monomer.

The protein resides in the cytoplasm. It catalyses the reaction (2R)-3-phosphoglycerate + ATP = (2R)-3-phospho-glyceroyl phosphate + ADP. The protein operates within carbohydrate degradation; glycolysis; pyruvate from D-glyceraldehyde 3-phosphate: step 2/5. This chain is Phosphoglycerate kinase, found in Acinetobacter baumannii (strain ACICU).